A 225-amino-acid chain; its full sequence is Putative N-acetylmannosamine-6-phosphate 2-epimerase (225 aa).

It belongs to the NanE family.

It carries out the reaction an N-acyl-D-glucosamine 6-phosphate = an N-acyl-D-mannosamine 6-phosphate. It functions in the pathway amino-sugar metabolism; N-acetylneuraminate degradation; D-fructose 6-phosphate from N-acetylneuraminate: step 3/5. Converts N-acetylmannosamine-6-phosphate (ManNAc-6-P) to N-acetylglucosamine-6-phosphate (GlcNAc-6-P). The chain is Putative N-acetylmannosamine-6-phosphate 2-epimerase from Vibrio vulnificus (strain CMCP6).